A 411-amino-acid chain; its full sequence is Probable peptidoglycan glycosyltransferase FtsW (411 aa).

Residues 1 to 40 (MLERMLPFLGRKRDKAAADLPVRVGHSAPRNSRMLEYDQN) lie on the Cytoplasmic side of the membrane. The chain crosses the membrane as a helical span at residues 41-61 (LVWVTLLLLAYGLVMVYSATI). Over 62-81 (SFHDSPRYAQWSPYHYFIRD) the chain is Periplasmic. Residues 82–102 (LFSIAAALLASWIVVQIPMAE) traverse the membrane as a helical segment. The Cytoplasmic portion of the chain corresponds to 103 to 109 (LQKWSMR). A helical membrane pass occupies residues 110 to 130 (FFFLSLIGLVLVLLPHIGKDV). Residues 131-136 (NGSKRW) lie on the Periplasmic side of the membrane. Residues 137 to 157 (VVFPGGLNFQPSELVKLTALI) form a helical membrane-spanning segment. The Cytoplasmic portion of the chain corresponds to 158–172 (YAADFMVRKQEVKQS). Residues 173–193 (LLKTFLPMMAVMMIVGVLLLA) traverse the membrane as a helical segment. At 194-196 (EPD) the chain is on the periplasmic side. Residues 197–217 (MGAFLVIASITLAILFLGGAN) form a helical membrane-spanning segment. The Cytoplasmic portion of the chain corresponds to 218 to 219 (GK). A helical transmembrane segment spans residues 220–240 (LFSVFSVAVIGAFVLMIVLSP). At 241 to 298 (WRRDRIFAYLNPWSESNALGSAYQLSHALIAMGRGEWFGVGLGGSIEKLHYLPEAHTD) the chain is on the periplasmic side. Residues 299 to 319 (FLLAIIGEELGLVGVGVVIFA) form a helical membrane-spanning segment. Residues 320–347 (FYWIVRRAFDIGRQALVLDRMYSALVAQ) are Cytoplasmic-facing. Residues 348-368 (GIGVWIGGQAFINIGVNLGLL) form a helical membrane-spanning segment. At 369 to 374 (PTKGLT) the chain is on the periplasmic side. The helical transmembrane segment at 375–395 (LPLMSYGGSALLLNCMAIAVL) threads the bilayer. The Cytoplasmic portion of the chain corresponds to 396–411 (LRVDFENRILMRGGHV).

Belongs to the SEDS family. FtsW subfamily.

It is found in the cell inner membrane. It carries out the reaction [GlcNAc-(1-&gt;4)-Mur2Ac(oyl-L-Ala-gamma-D-Glu-L-Lys-D-Ala-D-Ala)](n)-di-trans,octa-cis-undecaprenyl diphosphate + beta-D-GlcNAc-(1-&gt;4)-Mur2Ac(oyl-L-Ala-gamma-D-Glu-L-Lys-D-Ala-D-Ala)-di-trans,octa-cis-undecaprenyl diphosphate = [GlcNAc-(1-&gt;4)-Mur2Ac(oyl-L-Ala-gamma-D-Glu-L-Lys-D-Ala-D-Ala)](n+1)-di-trans,octa-cis-undecaprenyl diphosphate + di-trans,octa-cis-undecaprenyl diphosphate + H(+). It participates in cell wall biogenesis; peptidoglycan biosynthesis. Its function is as follows. Peptidoglycan polymerase that is essential for cell division. The chain is Probable peptidoglycan glycosyltransferase FtsW from Thiomonas intermedia (strain K12) (Thiobacillus intermedius).